Reading from the N-terminus, the 349-residue chain is Small ribosomal subunit biogenesis GTPase RsgA 2 (349 aa).

In terms of domain architecture, CP-type G spans 97–252; that stretch reads AEQLIATNVD…IIDTPGMREL (156 aa). GTP contacts are provided by residues 142–145 and 194–202; these read TKAD and GSSGVGKST. Cys275, Cys280, His282, and Cys288 together coordinate Zn(2+).

Belongs to the TRAFAC class YlqF/YawG GTPase family. RsgA subfamily. In terms of assembly, monomer. Associates with 30S ribosomal subunit, binds 16S rRNA. Zn(2+) serves as cofactor.

The protein localises to the cytoplasm. One of several proteins that assist in the late maturation steps of the functional core of the 30S ribosomal subunit. Helps release RbfA from mature subunits. May play a role in the assembly of ribosomal proteins into the subunit. Circularly permuted GTPase that catalyzes slow GTP hydrolysis, GTPase activity is stimulated by the 30S ribosomal subunit. This Vibrio vulnificus (strain CMCP6) protein is Small ribosomal subunit biogenesis GTPase RsgA 2.